A 597-amino-acid polypeptide reads, in one-letter code: uncharacterized protein (597 aa).

Disordered regions lie at residues 165 to 197 and 278 to 344; these read NSRAVPPPAPPNPPKMEKHMSHDTSGRGSIFSK and ERSS…RGTL. Residues 169-178 show a composition bias toward pro residues; it reads VPPPAPPNPP. A compositionally biased stretch (basic and acidic residues) spans 179–189; sequence KMEKHMSHDTS. Residues 293–313 show a composition bias toward low complexity; that stretch reads STEVSITSSSPSPSSSSSTST. One can recognise an SAM domain in the interval 402–465; that stretch reads WSLDDVLLWL…LDDLSKIIEN (64 aa). The disordered stretch occupies residues 576-597; the sequence is EESQQKESSSSGISSSPQTPTE. The span at 581–597 shows a compositional bias: low complexity; that stretch reads KESSSSGISSSPQTPTE.

This is an uncharacterized protein from Caenorhabditis elegans.